The following is a 431-amino-acid chain: Histidine--tRNA ligase (431 aa).

It belongs to the class-II aminoacyl-tRNA synthetase family. In terms of assembly, homodimer.

It localises to the cytoplasm. The catalysed reaction is tRNA(His) + L-histidine + ATP = L-histidyl-tRNA(His) + AMP + diphosphate + H(+). This chain is Histidine--tRNA ligase, found in Neisseria meningitidis serogroup B (strain ATCC BAA-335 / MC58).